The following is an 82-amino-acid chain: Small ribosomal subunit protein bS18 (82 aa).

Residues 1–20 (MVDINQIPTRRPFHRRRKTC) are disordered.

This sequence belongs to the bacterial ribosomal protein bS18 family. As to quaternary structure, part of the 30S ribosomal subunit. Forms a tight heterodimer with protein bS6.

In terms of biological role, binds as a heterodimer with protein bS6 to the central domain of the 16S rRNA, where it helps stabilize the platform of the 30S subunit. The protein is Small ribosomal subunit protein bS18 of Mesorhizobium japonicum (strain LMG 29417 / CECT 9101 / MAFF 303099) (Mesorhizobium loti (strain MAFF 303099)).